Here is a 526-residue protein sequence, read N- to C-terminus: Germ cell-less protein-like 2 (526 aa).

A disordered region spans residues 1 to 85 (MGSSSSRVLG…DKQQPLLNTP (85 aa)). The Nuclear localization signal motif lies at 49–55 (SHKRKRS). Positions 62–77 (CDPDSHREEHEEEGDK) are enriched in basic and acidic residues. Positions 85–91 (PARKKLR) match the Nuclear localization signal motif. The BTB domain occupies 108-178 (SDIKICALGE…LYRDDVLIKP (71 aa)).

Interacts with CUL3. Expressed predominantly in testis.

The protein localises to the nucleus matrix. It participates in protein modification; protein ubiquitination. In terms of biological role, possible function in spermatogenesis. Probable substrate-specific adapter of an E3 ubiquitin-protein ligase complex which mediates the ubiquitination and subsequent proteasomal degradation of target proteins. This Homo sapiens (Human) protein is Germ cell-less protein-like 2.